A 167-amino-acid chain; its full sequence is UPF0179 protein PAE0681 (167 aa).

Residues 142 to 167 (PSPSGSSISATSQGPSRAPPSRRLLK) are disordered. Over residues 145–157 (SGSSISATSQGPS) the composition is skewed to low complexity.

This sequence belongs to the UPF0179 family.

This Pyrobaculum aerophilum (strain ATCC 51768 / DSM 7523 / JCM 9630 / CIP 104966 / NBRC 100827 / IM2) protein is UPF0179 protein PAE0681.